Consider the following 143-residue polypeptide: MSLTEKDKAAVIAMWGKIHKSADAIGADALGRMLVVYPQTKTYFSHWSDLSPNSAPVKTHGKNVMSGVALAVSKIDDMTKGLMALSEQHAFQLRVDPANFKILSHCILVVIASMFPKDFTPEAHVSMDKFFCGLSLALAEKYR.

Residue Ser2 is modified to N-acetylserine. A Globin domain is found at 2-143; sequence SLTEKDKAAV…LSLALAEKYR (142 aa). His60 lines the O2 pocket. His89 lines the heme b pocket.

It belongs to the globin family. As to quaternary structure, hb2 is a heterotetramer of two alpha-2 chains and two beta-1 chains; Hb3 is a heterotetramer of two alpha-2 chains and two beta-2 chains. As to expression, red blood cells.

In terms of biological role, involved in oxygen transport from gills to the various peripheral tissues. In Anarhichas minor (Arctic spotted wolffish), this protein is Hemoglobin subunit alpha-2 (hba2).